A 477-amino-acid polypeptide reads, in one-letter code: Argininosuccinate lyase (477 aa).

The protein belongs to the lyase 1 family. Argininosuccinate lyase subfamily.

It localises to the cytoplasm. It catalyses the reaction 2-(N(omega)-L-arginino)succinate = fumarate + L-arginine. It functions in the pathway amino-acid biosynthesis; L-arginine biosynthesis; L-arginine from L-ornithine and carbamoyl phosphate: step 3/3. The protein is Argininosuccinate lyase of Streptomyces avermitilis (strain ATCC 31267 / DSM 46492 / JCM 5070 / NBRC 14893 / NCIMB 12804 / NRRL 8165 / MA-4680).